The primary structure comprises 51 residues: Large ribosomal subunit protein eL39 (51 aa).

This sequence belongs to the eukaryotic ribosomal protein eL39 family.

This Sulfurisphaera tokodaii (strain DSM 16993 / JCM 10545 / NBRC 100140 / 7) (Sulfolobus tokodaii) protein is Large ribosomal subunit protein eL39.